We begin with the raw amino-acid sequence, 316 residues long: Apolipoprotein E (316 aa).

Positions 1–18 (MKVLWVALVVALLAGCQA) are cleaved as a signal peptide. 8 repeat units span residues 79 to 100 (VLME…GQLA), 101 to 122 (PMAQ…ARLG), 123 to 144 (SDME…AMLG), 145 to 166 (QSTE…KRLL), 167 to 188 (RDAD…EGAE), 189 to 210 (RSVS…SRAA), 211 to 232 (TLST…QKLH), and 233 to 254 (GRLE…QQLE). An 8 X 22 AA approximate tandem repeats region spans residues 79–254 (VLMEETMKEV…RLDKMRQQLE (176 aa)). Met142 carries the methionine sulfoxide modification. Ser146 bears the Phosphoserine mark. Residues 157–167 (HLRKLRKRLLR) are LDL and other lipoprotein receptors binding. Residue 161-164 (LRKR) coordinates heparin. Residues 209–289 (AATLSTQVGQ…SWFEPLVEDM (81 aa)) are lipid-binding and lipoprotein association. 228–235 (RQKLHGRL) lines the heparin pocket. The tract at residues 265 to 316 (SQIRLQAEAFQARLRSWFEPLVEDMQRQWAGLVEKVQLALHLSPTSPPSENH) is homooligomerization. The segment at 277-289 (RLRSWFEPLVEDM) is specificity for association with VLDL.

It belongs to the apolipoprotein A1/A4/E family. In terms of assembly, homotetramer. May interact with ABCA1; functionally associated with ABCA1 in the biogenesis of HDLs. May interact with APP/A4 amyloid-beta peptide; the interaction is extremely stable in vitro but its physiological significance is unclear. May interact with MAPT. May interact with MAP2. In the cerebrospinal fluid, interacts with secreted SORL1. Interacts with PMEL; this allows the loading of PMEL luminal fragment on ILVs to induce fibril nucleation. APOE exists as multiple glycosylated and sialylated glycoforms within cells and in plasma. The extent of glycosylation and sialylation are tissue and context specific. Post-translationally, glycated in plasma VLDL. In terms of processing, phosphorylated by FAM20C in the extracellular medium.

Its subcellular location is the secreted. The protein localises to the extracellular space. It is found in the extracellular matrix. It localises to the extracellular vesicle. The protein resides in the endosome. Its subcellular location is the multivesicular body. APOE is an apolipoprotein, a protein associating with lipid particles, that mainly functions in lipoprotein-mediated lipid transport between organs via the plasma and interstitial fluids. APOE is a core component of plasma lipoproteins and is involved in their production, conversion and clearance. Apolipoproteins are amphipathic molecules that interact both with lipids of the lipoprotein particle core and the aqueous environment of the plasma. As such, APOE associates with chylomicrons, chylomicron remnants, very low density lipoproteins (VLDL) and intermediate density lipoproteins (IDL) but shows a preferential binding to high-density lipoproteins (HDL). It also binds a wide range of cellular receptors including the LDL receptor/LDLR and the very low-density lipoprotein receptor/VLDLR that mediate the cellular uptake of the APOE-containing lipoprotein particles. Finally, APOE also has a heparin-binding activity and binds heparan-sulfate proteoglycans on the surface of cells, a property that supports the capture and the receptor-mediated uptake of APOE-containing lipoproteins by cells. This chain is Apolipoprotein E (APOE), found in Ovis aries (Sheep).